The sequence spans 184 residues: MASTLPVQTLPLILILLAVLAPGTADFNISSLSGLLSPALTESLLIALPPCHLTGGNATLMVRRANDSKVVKSDFVVPPCRGRRELVSVVDSGSGYTVTRLSAYQVTNLTPGTKYYISYRVQKGTSTESSPETPMSTLPRKNMESIGLGMARTGGMVVITVLLSVAMFLLVVGLIVALHWDARK.

Positions 1-25 are cleaved as a signal peptide; it reads MASTLPVQTLPLILILLAVLAPGTA. Positions 26–84 are excised as a propeptide; the sequence is DFNISSLSGLLSPALTESLLIALPPCHLTGGNATLMVRRANDSKVVKSDFVVPPCRGRR. N-linked (GlcNAc...) asparagine glycosylation is found at asparagine 28, asparagine 57, and asparagine 66. Topologically, residues 85–155 are lumenal; sequence ELVSVVDSGS…IGLGMARTGG (71 aa). Residues 156–180 form a helical membrane-spanning segment; that stretch reads MVVITVLLSVAMFLLVVGLIVALHW. Topologically, residues 181 to 184 are cytoplasmic; it reads DARK.

Belongs to the uroplakin-2 family. Interacts with uroplakin-1a (UPK1A).

The protein localises to the cell membrane. In terms of biological role, component of the asymmetric unit membrane (AUM); a highly specialized biomembrane elaborated by terminally differentiated urothelial cells. May play an important role in regulating the assembly of the AUM. This Mus musculus (Mouse) protein is Uroplakin-2 (Upk2).